The following is a 360-amino-acid chain: Ribosomal RNA small subunit methyltransferase C (360 aa).

It belongs to the methyltransferase superfamily. RsmC family. Monomer.

The protein localises to the cytoplasm. It carries out the reaction guanosine(1207) in 16S rRNA + S-adenosyl-L-methionine = N(2)-methylguanosine(1207) in 16S rRNA + S-adenosyl-L-homocysteine + H(+). In terms of biological role, specifically methylates the guanine in position 1207 of 16S rRNA in the 30S particle. The chain is Ribosomal RNA small subunit methyltransferase C from Alteromonas mediterranea (strain DSM 17117 / CIP 110805 / LMG 28347 / Deep ecotype).